Reading from the N-terminus, the 129-residue chain is Transcriptional regulator WhiB2 (129 aa).

The interval 23–45 is disordered; sequence SHAPHIDTGSTPTGAAGRPQLSL. The 4Fe-4S Wbl-type domain occupies 66–123; it reads LCAQTDPEAFFPEKGGSTREAKRICQGCEVRDACLEYALAHDERFGIWGGLSERERRR. Residues C67, C90, C93, and C99 each coordinate [4Fe-4S] cluster.

Belongs to the WhiB family. The cofactor is [4Fe-4S] cluster. The Fe-S cluster can be nitrosylated by nitric oxide (NO). In terms of processing, upon Fe-S cluster removal intramolecular disulfide bonds are formed.

It localises to the cytoplasm. Acts as a transcriptional regulator. Probably redox-responsive. The apo- but not holo-form probably binds DNA. The protein is Transcriptional regulator WhiB2 (whiB2) of Mycolicibacterium smegmatis (strain ATCC 700084 / mc(2)155) (Mycobacterium smegmatis).